A 141-amino-acid chain; its full sequence is Large ribosomal subunit protein uL11 (141 aa).

Belongs to the universal ribosomal protein uL11 family. In terms of assembly, part of the ribosomal stalk of the 50S ribosomal subunit. Interacts with L10 and the large rRNA to form the base of the stalk. L10 forms an elongated spine to which L12 dimers bind in a sequential fashion forming a multimeric L10(L12)X complex. One or more lysine residues are methylated.

In terms of biological role, forms part of the ribosomal stalk which helps the ribosome interact with GTP-bound translation factors. This chain is Large ribosomal subunit protein uL11, found in Chloroflexus aggregans (strain MD-66 / DSM 9485).